The primary structure comprises 161 residues: ATP synthase subunit b 1 (161 aa).

The helical transmembrane segment at 3 to 23 (LDATFYALVGLILFFVLIAYL) threads the bilayer.

It belongs to the ATPase B chain family. In terms of assembly, F-type ATPases have 2 components, F(1) - the catalytic core - and F(0) - the membrane proton channel. F(1) has five subunits: alpha(3), beta(3), gamma(1), delta(1), epsilon(1). F(0) has three main subunits: a(1), b(2) and c(10-14). The alpha and beta chains form an alternating ring which encloses part of the gamma chain. F(1) is attached to F(0) by a central stalk formed by the gamma and epsilon chains, while a peripheral stalk is formed by the delta and b chains.

The protein localises to the cell inner membrane. Functionally, f(1)F(0) ATP synthase produces ATP from ADP in the presence of a proton or sodium gradient. F-type ATPases consist of two structural domains, F(1) containing the extramembraneous catalytic core and F(0) containing the membrane proton channel, linked together by a central stalk and a peripheral stalk. During catalysis, ATP synthesis in the catalytic domain of F(1) is coupled via a rotary mechanism of the central stalk subunits to proton translocation. Its function is as follows. Component of the F(0) channel, it forms part of the peripheral stalk, linking F(1) to F(0). The sequence is that of ATP synthase subunit b 1 from Rhizobium meliloti (strain 1021) (Ensifer meliloti).